The sequence spans 334 residues: Beta-ketoacyl-[acyl-carrier-protein] synthase III (334 aa).

Residues Cys-114 and His-253 contribute to the active site. The ACP-binding stretch occupies residues 254 to 258; sequence QANIR. The active site involves Asn-283.

Belongs to the thiolase-like superfamily. FabH family. Homodimer.

The protein localises to the cytoplasm. It carries out the reaction malonyl-[ACP] + acetyl-CoA + H(+) = 3-oxobutanoyl-[ACP] + CO2 + CoA. It functions in the pathway lipid metabolism; fatty acid biosynthesis. Functionally, catalyzes the condensation reaction of fatty acid synthesis by the addition to an acyl acceptor of two carbons from malonyl-ACP. Catalyzes the first condensation reaction which initiates fatty acid synthesis and may therefore play a role in governing the total rate of fatty acid production. Possesses both acetoacetyl-ACP synthase and acetyl transacylase activities. Its substrate specificity determines the biosynthesis of branched-chain and/or straight-chain of fatty acids. This Campylobacter curvus (strain 525.92) protein is Beta-ketoacyl-[acyl-carrier-protein] synthase III.